We begin with the raw amino-acid sequence, 457 residues long: Bifunctional protein GlmU (457 aa).

The pyrophosphorylase stretch occupies residues 1 to 229; that stretch reads MYNCAIILAA…YEEIMGVNSR (229 aa). UDP-N-acetyl-alpha-D-glucosamine-binding positions include 8 to 11, lysine 22, glutamine 73, and 78 to 79; these read LAAG and GT. Position 103 (aspartate 103) interacts with Mg(2+). Glycine 140, glutamate 155, asparagine 170, and asparagine 227 together coordinate UDP-N-acetyl-alpha-D-glucosamine. Asparagine 227 is a binding site for Mg(2+). The interval 230–250 is linker; it reads VQLSEAEIVMRKRINHKHMVN. An N-acetyltransferase region spans residues 251 to 457; it reads GVTFIDCEST…WLDKKGLLKK (207 aa). The UDP-N-acetyl-alpha-D-glucosamine site is built by arginine 332 and lysine 350. Residue histidine 362 is the Proton acceptor of the active site. Positions 365 and 376 each coordinate UDP-N-acetyl-alpha-D-glucosamine. Residues 385–386, alanine 422, and arginine 439 each bind acetyl-CoA; that span reads NY.

The protein in the N-terminal section; belongs to the N-acetylglucosamine-1-phosphate uridyltransferase family. In the C-terminal section; belongs to the transferase hexapeptide repeat family. Homotrimer. The cofactor is Mg(2+).

The protein localises to the cytoplasm. It catalyses the reaction alpha-D-glucosamine 1-phosphate + acetyl-CoA = N-acetyl-alpha-D-glucosamine 1-phosphate + CoA + H(+). It carries out the reaction N-acetyl-alpha-D-glucosamine 1-phosphate + UTP + H(+) = UDP-N-acetyl-alpha-D-glucosamine + diphosphate. Its pathway is nucleotide-sugar biosynthesis; UDP-N-acetyl-alpha-D-glucosamine biosynthesis; N-acetyl-alpha-D-glucosamine 1-phosphate from alpha-D-glucosamine 6-phosphate (route II): step 2/2. It functions in the pathway nucleotide-sugar biosynthesis; UDP-N-acetyl-alpha-D-glucosamine biosynthesis; UDP-N-acetyl-alpha-D-glucosamine from N-acetyl-alpha-D-glucosamine 1-phosphate: step 1/1. The protein operates within bacterial outer membrane biogenesis; LPS lipid A biosynthesis. Functionally, catalyzes the last two sequential reactions in the de novo biosynthetic pathway for UDP-N-acetylglucosamine (UDP-GlcNAc). The C-terminal domain catalyzes the transfer of acetyl group from acetyl coenzyme A to glucosamine-1-phosphate (GlcN-1-P) to produce N-acetylglucosamine-1-phosphate (GlcNAc-1-P), which is converted into UDP-GlcNAc by the transfer of uridine 5-monophosphate (from uridine 5-triphosphate), a reaction catalyzed by the N-terminal domain. In Clostridium botulinum (strain 657 / Type Ba4), this protein is Bifunctional protein GlmU.